The sequence spans 420 residues: Glucose-1-phosphate adenylyltransferase (420 aa).

Alpha-D-glucose 1-phosphate contacts are provided by residues Tyr-107, Gly-172, 187–188, and Ser-205; that span reads EK.

Belongs to the bacterial/plant glucose-1-phosphate adenylyltransferase family. Homotetramer.

It carries out the reaction alpha-D-glucose 1-phosphate + ATP + H(+) = ADP-alpha-D-glucose + diphosphate. The protein operates within glycan biosynthesis; glycogen biosynthesis. Involved in the biosynthesis of ADP-glucose, a building block required for the elongation reactions to produce glycogen. Catalyzes the reaction between ATP and alpha-D-glucose 1-phosphate (G1P) to produce pyrophosphate and ADP-Glc. This Rhodopseudomonas palustris (strain TIE-1) protein is Glucose-1-phosphate adenylyltransferase.